The sequence spans 78 residues: Acyl carrier protein (78 aa).

Positions 1–76 (MSVAEKVKEI…DAISFIEKKK (76 aa)) constitute a Carrier domain. O-(pantetheine 4'-phosphoryl)serine is present on serine 36.

The protein belongs to the acyl carrier protein (ACP) family. In terms of processing, 4'-phosphopantetheine is transferred from CoA to a specific serine of apo-ACP by AcpS. This modification is essential for activity because fatty acids are bound in thioester linkage to the sulfhydryl of the prosthetic group.

The protein resides in the cytoplasm. The protein operates within lipid metabolism; fatty acid biosynthesis. In terms of biological role, carrier of the growing fatty acid chain in fatty acid biosynthesis. The protein is Acyl carrier protein of Solidesulfovibrio magneticus (strain ATCC 700980 / DSM 13731 / RS-1) (Desulfovibrio magneticus).